Consider the following 588-residue polypeptide: MMRSHYCGALNRSHIGQQVILSGWVHKRRDLGGLIFIDMRDREGIVQVCFDPKYQEALTEASALRNEFCIKIEGEVIARPDNQINKNMATGEVEVVAKALSVYNVSDVLPLDFNQNNTEEQRLKYRYLDLRRPEMAQHLKTRAKITAFVRRYMDENGFLDIETPMLTKATPEGARDYLVPSRVHKGKFYALPQSPQLFKQLLMMSGFDRYYQIVKCFRDEDLRADRQPEFTQIDVETSFMTAPEVREIMEKMVHGLWLNTIGVDLGKFPTMTWQEAMERFGSDKPDLRNPLEIVDVADIVKDIDFNVFSDPANSSNGRVAVIRVPNGINITRKQIDEYTQFVGIYGAKGLAWVKINDINAGLEGVQSPIAKFLTTEKIKAIFDRTSAQSDDILFFGADKWQTATDAMGALRLKLGRDLGLTHLDEWKPLWVIDFPMFERDEEGNLAAMHHPFTSPKDFTPEQLEANPTSAVANAYDMVINGYEVGGGSVRIFDPKMQQTVFHILGIDEDQQREKFGFLLDALKFGTPPHAGLAFGLDRLTMLLTGTDNIRDVIAFPKTTAAACLMTDAPSLANEKALEELAIKVTRSE.

Residue Glu172 coordinates L-aspartate. The aspartate stretch occupies residues Gln196–Lys199. Arg218 lines the L-aspartate pocket. Residues Arg218–Glu220 and Gln227 each bind ATP. His449 contacts L-aspartate. Glu483 lines the ATP pocket. Arg490 is an L-aspartate binding site. Gly535 to Arg538 lines the ATP pocket.

It belongs to the class-II aminoacyl-tRNA synthetase family. Type 1 subfamily. Homodimer.

Its subcellular location is the cytoplasm. It catalyses the reaction tRNA(Asp) + L-aspartate + ATP = L-aspartyl-tRNA(Asp) + AMP + diphosphate. Catalyzes the attachment of L-aspartate to tRNA(Asp) in a two-step reaction: L-aspartate is first activated by ATP to form Asp-AMP and then transferred to the acceptor end of tRNA(Asp). This is Aspartate--tRNA ligase from Histophilus somni (strain 2336) (Haemophilus somnus).